A 2647-amino-acid polypeptide reads, in one-letter code: Filamin-A (2647 aa).

Residues 1 to 37 form a disordered region; that stretch reads MSSSHSRCGQSAAVASPGGSIDSRDAEMPATEKDLAE. At Ser2 the chain carries N-acetylserine. The actin-binding stretch occupies residues 2–274; the sequence is SSSHSRCGQS…PKAKLKPGAP (273 aa). Ser11, Ser16, and Ser20 each carry phosphoserine. A compositionally biased stretch (basic and acidic residues) spans 22–37; the sequence is DSRDAEMPATEKDLAE. Residues Lys42, Lys43, and Lys135 each participate in a glycyl lysine isopeptide (Lys-Gly) (interchain with G-Cter in ubiquitin) cross-link. Calponin-homology (CH) domains lie at 43–149 and 166–269; these read KIQQ…LHYS and QTPK…KAKL. The interval 271–294 is disordered; the sequence is PGAPLRPKLNPKKARAYGPGIEPT. Filamin repeat units follow at residues 276–374, 376–474, 475–570, 571–663, 667–763, 764–866, 867–965, 966–1061, 1062–1154, 1155–1249, 1250–1349, 1350–1442, 1443–1539, 1540–1636, and 1641–1740; these read RPKL…EVYV, KSQG…TVTV, GQAC…EVKV, GTEC…MADI, PQDF…RVNV, GAGS…RVKV, EPSH…SVGV, SPSL…PLEA, VAPT…KAHV, APCF…KLQV, EPAV…QVPV, TEGC…KVPV, HDVT…KVKV, LPTH…RVRA, and DASK…QVTA. Lys299 participates in a covalent cross-link: Glycyl lysine isopeptide (Lys-Gly) (interchain with G-Cter in SUMO1); alternate. Lys299 participates in a covalent cross-link: Glycyl lysine isopeptide (Lys-Gly) (interchain with G-Cter in SUMO2); alternate. An N6-acetyllysine mark is found at Lys376 and Lys508. An N6-acetyllysine mark is found at Lys700, Lys781, Lys837, Lys865, and Lys906. 2 positions are modified to phosphoserine: Ser968 and Ser1055. Lys1071 carries the N6-acetyllysine; alternate modification. The residue at position 1071 (Lys1071) is an N6-succinyllysine; alternate. Residue Ser1084 is modified to Phosphoserine. Position 1089 is a phosphothreonine (Thr1089). Residues Ser1301 and Ser1338 each carry the phosphoserine modification. The residue at position 1372 (Lys1372) is an N6-acetyllysine. 2 positions are modified to phosphoserine: Ser1459 and Ser1533. Positions 1490–1607 are interaction with furin; that stretch reads PKGLVEPVDV…DNHDGTYTVA (118 aa). Lys1538 carries the post-translational modification N6-acetyllysine. Residues Ser1630 and Ser1734 each carry the phosphoserine modification. Residues 1741-1778 are hinge 1; that stretch reads LAGDQPTVQTPLRSQQLAPQYNYPQGSQQTWIPERPMV. Thr1750 is subject to Phosphothreonine. Filamin repeat units follow at residues 1765 to 1860, 1861 to 1952, 1953 to 2039, 2042 to 2134, 2135 to 2230, 2233 to 2325, 2327 to 2420, and 2424 to 2516; these read QGSQ…QFYV, DYVN…TARV, TGDD…PVVI, SEIG…SVKV, TGEG…QFTV, LGEG…VVPV, SPSG…KIRV, and GHGG…KAKV. Ser1835 carries the post-translational modification Phosphoserine. Phosphoserine occurs at positions 1967, 2053, 2128, 2152, 2158, 2163, 2180, 2284, 2327, and 2329. A Phosphothreonine modification is found at Thr2336. 6 positions are modified to phosphoserine: Ser2338, Ser2370, Ser2414, Ser2510, Ser2523, and Ser2526. Residues 2517–2553 form a hinge 2 region; it reads TGPRLVSNHSLHETSSVFVDSLTKVATVPQHATSGPG. Residues 2517–2647 form a self-association site, tail region; it reads TGPRLVSNHS…PGSPYRIMVP (131 aa). Residues 2552 to 2646 form a Filamin 24 repeat; sequence PGPADVSKVV…IPGSPYRIMV (95 aa). Lys2569 is subject to N6-acetyllysine; alternate. Lys2569 is subject to N6-succinyllysine; alternate. Lys2575 carries the N6-acetyllysine modification. Thr2599 carries the phosphothreonine modification. N6-acetyllysine occurs at positions 2607 and 2621.

It belongs to the filamin family. Homodimer. Interacts with FCGR1A, FLNB, FURIN, HSPB7, KCND2, INPPL1, MYOT, MYOZ1, PDLIM2, ARHGAP24, PSEN1, PSEN2 and ECSCR. Also interacts with various other binding partners in addition to filamentous actin. Interacts (via N-terminus) with TAF1B. Interacts (via N-terminus) with MIS18BP1 (via N-terminus). Interacts with TMEM67 (via C-terminus) and MKS1. Interacts (via actin-binding domain) with MICALL2 (via calponin-homology (CH) domain). Interacts with RFLNA and RFLNB. Interacts (via filamin repeat 5) with SYK; docks SYK to the plasma membrane. Interacts (via filamin repeats 19 and 21) with DRD3; increased PKA-mediated phosphorylation at Ser-2152. Interacts (via filamin repeat 21) with MAS1, AGTR1 and ADRA1D; increases PKA-mediated phosphorylation of FLNA at Ser-2152. Interacts (via filamin repeats 4, 9, 12, 17, 19, 21, and 23) with GP1BA (high affinity), ITGB7, ITGB2 and FBLIM1. Interacts with CEACAM1 (via cytoplasmic domain); inhibits cell migration and cell scattering by interfering with the interaction between FLNA and RALA. Interacts with FOXC1. Interacts (via calponin-homology (CH) domain 1 and filamin repeat 24) with CRMP1; the interaction alters FLNA ternary structure and thus promotes FLNA dissociation from F-actin. Interacts with DPYSL3/CRMP3 and DPYSL4/CRMP4. Phosphorylation at Ser-2152 is negatively regulated by the autoinhibited conformation of filamin repeats 19-21. Ligand binding induces a conformational switch triggering phosphorylation at Ser-2152 by PKA. Post-translationally, polyubiquitination in the CH1 domain by a SCF-like complex containing ASB2 leads to proteasomal degradation. Prior dissociation from actin may be required to expose the target lysines. Ubiquitinated in endothelial cells by RNF213 downstream of the non-canonical Wnt signaling pathway, leading to its degradation by the proteasome. As to expression, widely expressed. Highly expressed in Purkinje cells.

It is found in the cytoplasm. The protein localises to the cell cortex. Its subcellular location is the cytoskeleton. The protein resides in the perikaryon. It localises to the cell projection. It is found in the growth cone. The protein localises to the podosome. Actin binding protein that promotes orthogonal branching of actin filaments and links actin filaments to membrane glycoproteins. Anchors various transmembrane proteins to the actin cytoskeleton and serves as a scaffold for a wide range of cytoplasmic signaling proteins. Interaction with FLNB may allow neuroblast migration from the ventricular zone into the cortical plate. Tethers cell surface-localized furin, modulates its rate of internalization and directs its intracellular trafficking. Involved in ciliogenesis. Plays a role in cell-cell contacts and adherens junctions during the development of blood vessels, heart and brain organs. Plays a role in platelets morphology through interaction with SYK that regulates ITAM- and ITAM-like-containing receptor signaling, resulting in by platelet cytoskeleton organization maintenance. During the axon guidance process, required for growth cone collapse induced by SEMA3A-mediated stimulation of neurons. This chain is Filamin-A (Flna), found in Mus musculus (Mouse).